The sequence spans 527 residues: Putative zinc finger CCCH domain-containing protein 64 (527 aa).

Positions 103–127 are disordered; sequence GQLRSTQTTSKRKAASRKGQREQRV. The segment at 213-241 adopts a C3H1-type zinc-finger fold; the sequence is RPGEPFCRYYMKFGECKHMTFCKYNHPKD.

This chain is Putative zinc finger CCCH domain-containing protein 64, found in Oryza sativa subsp. japonica (Rice).